A 470-amino-acid polypeptide reads, in one-letter code: 24-hydroxycholesterol 7-alpha-hydroxylase (470 aa).

The next 2 membrane-spanning stretches (helical) occupy residues 3-23 (IMELFSPIAIAVLGSCVLFLF) and 270-290 (VVLWAALANAPPIAFWTLGYI). Cys415 is a heme binding site.

It belongs to the cytochrome P450 family. Heme is required as a cofactor. As to expression, liver specific. Hepatic expression is sexually dimorphic (female &gt; male).

The protein localises to the endoplasmic reticulum membrane. Its subcellular location is the microsome membrane. The enzyme catalyses (24S)-hydroxycholesterol + reduced [NADPH--hemoprotein reductase] + O2 = (24S)-7alpha-dihydroxycholesterol + oxidized [NADPH--hemoprotein reductase] + H2O + H(+). It functions in the pathway steroid metabolism; cholesterol degradation. It participates in lipid metabolism; bile acid biosynthesis. Its function is as follows. A cytochrome P450 monooxygenase involved in neural cholesterol clearance through bile acid synthesis. Catalyzes 7-alpha hydroxylation of (24S)-hydroxycholesterol, a neural oxysterol that is metabolized to bile acids in the liver. Mechanistically, uses molecular oxygen inserting one oxygen atom into a substrate, and reducing the second into a water molecule, with two electrons provided by NADPH via cytochrome P450 reductase (CPR; NADPH-ferrihemoprotein reductase). This chain is 24-hydroxycholesterol 7-alpha-hydroxylase (Cyp39a1), found in Mus musculus (Mouse).